Consider the following 446-residue polypeptide: Histidine--tRNA ligase (446 aa).

The protein belongs to the class-II aminoacyl-tRNA synthetase family. As to quaternary structure, homodimer.

It localises to the cytoplasm. It catalyses the reaction tRNA(His) + L-histidine + ATP = L-histidyl-tRNA(His) + AMP + diphosphate + H(+). This chain is Histidine--tRNA ligase, found in Burkholderia cenocepacia (strain HI2424).